Here is a 309-residue protein sequence, read N- to C-terminus: 4-hydroxy-3-methylbut-2-enyl diphosphate reductase (309 aa).

Residue Cys-12 participates in [4Fe-4S] cluster binding. (2E)-4-hydroxy-3-methylbut-2-enyl diphosphate contacts are provided by His-41 and His-74. 2 residues coordinate dimethylallyl diphosphate: His-41 and His-74. The isopentenyl diphosphate site is built by His-41 and His-74. Cys-96 provides a ligand contact to [4Fe-4S] cluster. Residue His-124 participates in (2E)-4-hydroxy-3-methylbut-2-enyl diphosphate binding. His-124 contributes to the dimethylallyl diphosphate binding site. Isopentenyl diphosphate is bound at residue His-124. Glu-126 functions as the Proton donor in the catalytic mechanism. A (2E)-4-hydroxy-3-methylbut-2-enyl diphosphate-binding site is contributed by Thr-167. Cys-197 is a binding site for [4Fe-4S] cluster. (2E)-4-hydroxy-3-methylbut-2-enyl diphosphate is bound by residues Ser-225, Ser-226, Asn-227, and Ser-269. 4 residues coordinate dimethylallyl diphosphate: Ser-225, Ser-226, Asn-227, and Ser-269. Ser-225, Ser-226, Asn-227, and Ser-269 together coordinate isopentenyl diphosphate.

It belongs to the IspH family. Requires [4Fe-4S] cluster as cofactor.

The enzyme catalyses isopentenyl diphosphate + 2 oxidized [2Fe-2S]-[ferredoxin] + H2O = (2E)-4-hydroxy-3-methylbut-2-enyl diphosphate + 2 reduced [2Fe-2S]-[ferredoxin] + 2 H(+). It catalyses the reaction dimethylallyl diphosphate + 2 oxidized [2Fe-2S]-[ferredoxin] + H2O = (2E)-4-hydroxy-3-methylbut-2-enyl diphosphate + 2 reduced [2Fe-2S]-[ferredoxin] + 2 H(+). Its pathway is isoprenoid biosynthesis; dimethylallyl diphosphate biosynthesis; dimethylallyl diphosphate from (2E)-4-hydroxy-3-methylbutenyl diphosphate: step 1/1. It functions in the pathway isoprenoid biosynthesis; isopentenyl diphosphate biosynthesis via DXP pathway; isopentenyl diphosphate from 1-deoxy-D-xylulose 5-phosphate: step 6/6. Catalyzes the conversion of 1-hydroxy-2-methyl-2-(E)-butenyl 4-diphosphate (HMBPP) into a mixture of isopentenyl diphosphate (IPP) and dimethylallyl diphosphate (DMAPP). Acts in the terminal step of the DOXP/MEP pathway for isoprenoid precursor biosynthesis. The chain is 4-hydroxy-3-methylbut-2-enyl diphosphate reductase from Shewanella halifaxensis (strain HAW-EB4).